Consider the following 409-residue polypeptide: MSTVQTPVQYLPAKTANSIKLVDEAQAKTNLLGMTQAQLADYFKSIGEKPFRSTQVIKWIYQQGVTDFEQMTNLSKSLRDKLSANACVIPPKVIHRQYSDDGTRKWVFEVTGGSLVETVLIPADDSKLNGRKTLCISSQVGCALDCSFCSTGKQGFERDLTAAEILGQLWVANASYMSDENDSLENIDHSLWENNVTNVVMMGMGEPLLNYRPVVSSMELMLSDHAYGLSKRRVTLSTSGVVPKMYELAKELDVALAISLHAPNDELRNELVPINKKYPLEQLMAAARNYVFDVNPRHKKHVTIEYVMLDGVNDSNEHAEQLVALLGDLPSKINLIPFNPFPHANYDKSSNNRIHAFSNILSEAGFVCTIRQTRGDDIDAACGQLVGQVADRTRRSAAWQQSIKDRENS.

The active-site Proton acceptor is Glu117. Residues Leu128–Asp377 form the Radical SAM core domain. Residues Cys135 and Cys382 are joined by a disulfide bond. The [4Fe-4S] cluster site is built by Cys142, Cys146, and Cys149. S-adenosyl-L-methionine contacts are provided by residues Gly205–Glu206, Ser237, Ser259–His261, and Asn339. Cys382 acts as the S-methylcysteine intermediate in catalysis.

It belongs to the radical SAM superfamily. RlmN family. The cofactor is [4Fe-4S] cluster.

The protein resides in the cytoplasm. It carries out the reaction adenosine(2503) in 23S rRNA + 2 reduced [2Fe-2S]-[ferredoxin] + 2 S-adenosyl-L-methionine = 2-methyladenosine(2503) in 23S rRNA + 5'-deoxyadenosine + L-methionine + 2 oxidized [2Fe-2S]-[ferredoxin] + S-adenosyl-L-homocysteine. The enzyme catalyses adenosine(37) in tRNA + 2 reduced [2Fe-2S]-[ferredoxin] + 2 S-adenosyl-L-methionine = 2-methyladenosine(37) in tRNA + 5'-deoxyadenosine + L-methionine + 2 oxidized [2Fe-2S]-[ferredoxin] + S-adenosyl-L-homocysteine. Its function is as follows. Specifically methylates position 2 of adenine 2503 in 23S rRNA and position 2 of adenine 37 in tRNAs. m2A2503 modification seems to play a crucial role in the proofreading step occurring at the peptidyl transferase center and thus would serve to optimize ribosomal fidelity. In Psychrobacter arcticus (strain DSM 17307 / VKM B-2377 / 273-4), this protein is Dual-specificity RNA methyltransferase RlmN.